The primary structure comprises 363 residues: Protein Wnt-5b (363 aa).

The signal sequence occupies residues 1-21 (MDVRMNQGHLLLAVTLIVCNS). Cys87 and Cys98 form a disulfide bridge. N-linked (GlcNAc...) asparagine glycans are attached at residues Asn97 and Asn103. Cystine bridges form between Cys137–Cys145, Cys147–Cys165, Cys221–Cys235, Cys223–Cys230, Cys292–Cys323, Cys308–Cys318, Cys322–Cys362, Cys338–Cys353, Cys340–Cys350, and Cys345–Cys346. A lipid anchor (O-palmitoleoyl serine; by PORCN) is attached at Ser227. 2 N-linked (GlcNAc...) asparagine glycosylation sites follow: Asn295 and Asn309.

The protein belongs to the Wnt family. In terms of processing, palmitoleoylation is required for efficient binding to frizzled receptors. Depalmitoleoylation leads to Wnt signaling pathway inhibition.

Its subcellular location is the secreted. It localises to the extracellular space. The protein localises to the extracellular matrix. In terms of biological role, ligand for members of the frizzled family of seven transmembrane receptors. Can activate or inhibit canonical Wnt signaling, depending on receptor context. Required during embryogenesis for extension of the primary anterior-posterior axis. Regulates convergent extension movements and hypaxial myogenesis during gastrulation via activation of non-canonical Wnt signaling. The chain is Protein Wnt-5b (wnt5b) from Danio rerio (Zebrafish).